The following is a 277-amino-acid chain: Homeobox protein Nkx-6.2 (277 aa).

The interval 89 to 142 (AGVYFGPAAAVARGYPKPLAELPGRPPIFWPGVVQGAPWRDPRLAGPAPAGGVL) is repressor domain. 2 disordered regions span residues 132–155 (LAGPAPAGGVLDKDGKKKHSRPTF) and 210–250 (EMAS…DDEK). The segment at residues 148–207 (KKHSRPTFSGQQIFALEKTFEQTKYLAGPERARLAYSLGMTESQVKVWFQNRRTKWRKRH) is a DNA-binding region (homeobox). A compositionally biased stretch (basic and acidic residues) spans 216-226 (KKQDSDAEKLK).

In terms of tissue distribution, highest expression in brain.

The protein resides in the nucleus. Its function is as follows. Transcription factor with repressor activity involved in the regulation of axon-glial interactions at myelin paranodes in oligodendrocytes. Binds to the consensus DNA sequence 5'-(A/T)TTAATGA-3'. In oligodendrocytes, binds to MBP and PLP1 promoter regions. The protein is Homeobox protein Nkx-6.2 (NKX6-2) of Homo sapiens (Human).